Reading from the N-terminus, the 217-residue chain is Somatotropin (217 aa).

The N-terminal stretch at 1-27 is a signal peptide; the sequence is MATGSHTATLLLAVALLGLPWPQEAGA. H46 lines the Zn(2+) pocket. A disulfide bond links C79 and C190. At S132 the chain carries Phosphoserine. E199 contributes to the Zn(2+) binding site. Residues C207 and C215 are joined by a disulfide bond.

It belongs to the somatotropin/prolactin family.

The protein resides in the secreted. Plays an important role in growth control. Its major role in stimulating body growth is to stimulate the liver and other tissues to secrete IGF1. It stimulates both the differentiation and proliferation of myoblasts. It also stimulates amino acid uptake and protein synthesis in muscle and other tissues. This chain is Somatotropin (GH1), found in Xanthonycticebus pygmaeus (Pygmy slow loris).